A 274-amino-acid polypeptide reads, in one-letter code: Triosephosphate isomerase (274 aa).

31–33 (NWK) is a substrate binding site. The active-site Electrophile is the H118. E188 functions as the Proton acceptor in the catalytic mechanism. Substrate-binding positions include G194, S234, and 255 to 256 (GG).

Belongs to the triosephosphate isomerase family. As to quaternary structure, homodimer.

The protein localises to the cytoplasm. The catalysed reaction is D-glyceraldehyde 3-phosphate = dihydroxyacetone phosphate. It functions in the pathway carbohydrate biosynthesis; gluconeogenesis. It participates in carbohydrate degradation; glycolysis; D-glyceraldehyde 3-phosphate from glycerone phosphate: step 1/1. Functionally, involved in the gluconeogenesis. Catalyzes stereospecifically the conversion of dihydroxyacetone phosphate (DHAP) to D-glyceraldehyde-3-phosphate (G3P). The chain is Triosephosphate isomerase from Chlamydia trachomatis serovar L2 (strain ATCC VR-902B / DSM 19102 / 434/Bu).